A 195-amino-acid polypeptide reads, in one-letter code: Imidazoleglycerol-phosphate dehydratase (195 aa).

Belongs to the imidazoleglycerol-phosphate dehydratase family.

It localises to the cytoplasm. It carries out the reaction D-erythro-1-(imidazol-4-yl)glycerol 3-phosphate = 3-(imidazol-4-yl)-2-oxopropyl phosphate + H2O. The protein operates within amino-acid biosynthesis; L-histidine biosynthesis; L-histidine from 5-phospho-alpha-D-ribose 1-diphosphate: step 6/9. The polypeptide is Imidazoleglycerol-phosphate dehydratase (Deinococcus deserti (strain DSM 17065 / CIP 109153 / LMG 22923 / VCD115)).